Consider the following 254-residue polypeptide: 3-deoxy-manno-octulosonate cytidylyltransferase (254 aa).

This sequence belongs to the KdsB family.

It localises to the cytoplasm. It catalyses the reaction 3-deoxy-alpha-D-manno-oct-2-ulosonate + CTP = CMP-3-deoxy-beta-D-manno-octulosonate + diphosphate. It participates in nucleotide-sugar biosynthesis; CMP-3-deoxy-D-manno-octulosonate biosynthesis; CMP-3-deoxy-D-manno-octulosonate from 3-deoxy-D-manno-octulosonate and CTP: step 1/1. It functions in the pathway bacterial outer membrane biogenesis; lipopolysaccharide biosynthesis. Functionally, activates KDO (a required 8-carbon sugar) for incorporation into bacterial lipopolysaccharide in Gram-negative bacteria. This Pseudomonas aeruginosa (strain LESB58) protein is 3-deoxy-manno-octulosonate cytidylyltransferase.